A 464-amino-acid polypeptide reads, in one-letter code: Soluble pyridine nucleotide transhydrogenase (464 aa).

35–44 (DDRRQVGGNC) is an FAD binding site.

The protein belongs to the class-I pyridine nucleotide-disulfide oxidoreductase family. FAD serves as cofactor.

It is found in the cytoplasm. It carries out the reaction NAD(+) + NADPH = NADH + NADP(+). Its function is as follows. Conversion of NADPH, generated by peripheral catabolic pathways, to NADH, which can enter the respiratory chain for energy generation. The chain is Soluble pyridine nucleotide transhydrogenase from Pseudomonas putida (strain GB-1).